Consider the following 699-residue polypeptide: Ecdysone-inducible protein E75 (699 aa).

A disordered region spans residues 1-31 (MTLVMSPDSSYGRYDAPTPTDVTSPVHRERE). A DNA-binding region (nuclear receptor) is located at residues 42–118 (TVLCRVCGDK…VGMSRDAVRF (77 aa)). NR C4-type zinc fingers lie at residues 45 to 65 (CRVC…CEGC) and 82 to 106 (CTKN…LKKC). Residues 152 to 399 (DAPRLLARVV…QQMWSEEEAV (248 aa)) form the NR LBD domain. Disordered regions lie at residues 466–528 (TVTP…DDMP), 561–607 (RRDT…STHS), and 679–699 (LNLS…MLEA). 2 stretches are compositionally biased toward basic and acidic residues: residues 510–520 (SLEEHNEDRRP) and 561–571 (RRDTGEAEART). The segment covering 575–588 (TPSPQPQHPHPANP) has biased composition (pro residues).

This sequence belongs to the nuclear hormone receptor family. NR1 subfamily.

It is found in the nucleus. Its function is as follows. Implicated in the regulation of ecdysone-triggered gene hierarchies. Probably plays a key role in mediating the regulation of the larval molt by 20-OH-ecdysone. This Manduca sexta (Tobacco hawkmoth) protein is Ecdysone-inducible protein E75 (E75).